The following is a 245-amino-acid chain: MAAVSGTRRTRAVSPTRWIVYAGSVFAGAWLATQLFYLVQIALWSFINPGSTAFMRTDAWWLSRDKPPAQVQHQWVPYDQISRNLKRALIASEDSTFATNNGYDVDAILQAWEKNKARGRIVAGGSTITQQLARNLFLSREKSYIRKGQELIITWMLETVLDKERIFEIYLNSVEWGRGVYGAEAAARYYYRIPASRLGAWQSARLAVMLPKPRWFDAHRGSAYQAQRAAVIARRMGAAELPQSQ.

The chain crosses the membrane as a helical span at residues V20–A42.

This sequence belongs to the glycosyltransferase 51 family.

Its subcellular location is the cell inner membrane. The enzyme catalyses [GlcNAc-(1-&gt;4)-Mur2Ac(oyl-L-Ala-gamma-D-Glu-L-Lys-D-Ala-D-Ala)](n)-di-trans,octa-cis-undecaprenyl diphosphate + beta-D-GlcNAc-(1-&gt;4)-Mur2Ac(oyl-L-Ala-gamma-D-Glu-L-Lys-D-Ala-D-Ala)-di-trans,octa-cis-undecaprenyl diphosphate = [GlcNAc-(1-&gt;4)-Mur2Ac(oyl-L-Ala-gamma-D-Glu-L-Lys-D-Ala-D-Ala)](n+1)-di-trans,octa-cis-undecaprenyl diphosphate + di-trans,octa-cis-undecaprenyl diphosphate + H(+). The protein operates within cell wall biogenesis; peptidoglycan biosynthesis. In terms of biological role, peptidoglycan polymerase that catalyzes glycan chain elongation from lipid-linked precursors. The sequence is that of Biosynthetic peptidoglycan transglycosylase from Burkholderia ambifaria (strain MC40-6).